Consider the following 121-residue polypeptide: Large ribosomal subunit protein bL20 (121 aa).

Belongs to the bacterial ribosomal protein bL20 family.

Binds directly to 23S ribosomal RNA and is necessary for the in vitro assembly process of the 50S ribosomal subunit. It is not involved in the protein synthesizing functions of that subunit. This chain is Large ribosomal subunit protein bL20, found in Koribacter versatilis (strain Ellin345).